Reading from the N-terminus, the 73-residue chain is Large ribosomal subunit protein bL31 (73 aa).

This sequence belongs to the bacterial ribosomal protein bL31 family. Type A subfamily. Part of the 50S ribosomal subunit.

Its function is as follows. Binds the 23S rRNA. This Chelativorans sp. (strain BNC1) protein is Large ribosomal subunit protein bL31.